A 93-amino-acid chain; its full sequence is RNA-binding protein Hfq (93 aa).

The region spanning aspartate 11 to isoleucine 71 is the Sm domain.

The protein belongs to the Hfq family. Homohexamer.

Functionally, RNA chaperone that binds small regulatory RNA (sRNAs) and mRNAs to facilitate mRNA translational regulation in response to envelope stress, environmental stress and changes in metabolite concentrations. Also binds with high specificity to tRNAs. The polypeptide is RNA-binding protein Hfq (Granulibacter bethesdensis (strain ATCC BAA-1260 / CGDNIH1)).